Reading from the N-terminus, the 172-residue chain is Single-stranded DNA-binding protein 2 (172 aa).

Residues 6 to 111 (VNKVILVGHI…VIVNVGGTMQ (106 aa)) form the SSB domain. A DNA-binding region spans residues 55 to 61 (WHRVVVF). The interval 113 to 172 (LGRHNSQPQQEPQTPPTAAKGEGKAVKGAGNAAKGKNAAAPQQPPAQPDPAYDFDDDIPF) is disordered. The span at 119–153 (QPQQEPQTPPTAAKGEGKAVKGAGNAAKGKNAAAP) shows a compositional bias: low complexity. Positions 167-172 (DDDIPF) match the Important for interaction with partner proteins motif.

As to quaternary structure, homotetramer.

Its function is as follows. Plays an important role in DNA replication, recombination and repair. Binds to ssDNA and to an array of partner proteins to recruit them to their sites of action during DNA metabolism. The chain is Single-stranded DNA-binding protein 2 (ssb2) from Salmonella typhimurium (strain LT2 / SGSC1412 / ATCC 700720).